Reading from the N-terminus, the 440-residue chain is Transposon Ty1-JR2 Gag polyprotein (440 aa).

Residues 1-16 (MESQQLSQHSHISHGS) are compositionally biased toward low complexity. Disordered regions lie at residues 1 to 93 (MESQ…MMTQ), 126 to 173 (PQSQ…RPPP), and 352 to 440 (GSRN…PETY). Polar residues-rich tracts occupy residues 48 to 60 (TKAN…TPAS), 71 to 93 (SPQT…MMTQ), and 127 to 152 (QSQF…GNTF). Positions 153–165 (TDSSSADSDMTST) are enriched in low complexity. The interval 299–401 (NNGIHINNKV…NSKSKTARAH (103 aa)) is RNA-binding. The segment covering 402–418 (NVSTSNNSPSTDNDSIS) has biased composition (low complexity). Ser-416 carries the phosphoserine modification. Polar residues predominate over residues 419–428 (KSTTEPIQLN). A compositionally biased stretch (basic and acidic residues) spans 429 to 440 (NKHDLHLRPETY).

Homotrimer.

It localises to the cytoplasm. Capsid protein (CA) is the structural component of the virus-like particle (VLP), forming the shell that encapsulates the retrotransposons dimeric RNA genome. The particles are assembled from trimer-clustered units and there are holes in the capsid shells that allow for the diffusion of macromolecules. CA also has nucleocapsid-like chaperone activity, promoting primer tRNA(i)-Met annealing to the multipartite primer-binding site (PBS), dimerization of Ty1 RNA and initiation of reverse transcription. The sequence is that of Transposon Ty1-JR2 Gag polyprotein (TY1A-JR2) from Saccharomyces cerevisiae (strain ATCC 204508 / S288c) (Baker's yeast).